We begin with the raw amino-acid sequence, 87 residues long: MTTVETLEPTITAEDVQQWLAEYIADVLEISESAIDFDTPFHQFGLDSSAVVGLVADLSEWSGVAIGIKSIRKNNSIHALSQFIAAK.

Residues 11–87 (ITAEDVQQWL…HALSQFIAAK (77 aa)) form the Carrier domain. Ser48 is modified (O-(pantetheine 4'-phosphoryl)serine).

It depends on pantetheine 4'-phosphate as a cofactor.

Carrier protein likely involved in the biosynthesis of a polyyne metabolite. Accepts as substrate the activated form of decanoic acid from TtuA. This is Acyl carrier protein TtuC from Teredinibacter turnerae (strain ATCC 39867 / T7901).